The primary structure comprises 538 residues: MAVSSKHIPAPDLHRVRRALLSVSDKTGLIDFAKALHAQGVEILSTGGTAKSIAAEGIPVKDVSEVTGFPEIMDGRVKTLHPAVHGGLLAVRNDREHVAAMEEHGIGGIDLAVINLYPFEEVRFKGGDYDTTVENIDIGGPAMIRASAKNHAYVATVVDPADYADVVAELEKHAGSLPLAFRKKLAAKAFSRTAAYDAAISNWFAEAINEETPVYRSVAGKLHSVMRYGENPHQTAGFYLTGEKRPGVATATQLQGKQLSYNNINDTDAAFELVAEFDPARTAAVAIIKHANPCGVAEAATIKEAYLKALACDPVSAFGGIVALNKTLDEEAAEEIVKIFTEVIIAPDATEGAQAIVAAKKNLRLLVTGGLPDPRAKGIAAKTVAGGLLVQSRDNGVVDDLDLKVVTKRAPTEAELNDMKFAFRVGKHVKSNAIVYVKDGATVGIGAGQMSRVDSARIAARKAEDAAEAAGLAEPLTKGCVVASDAFFPFADGLLSAVQAGATAVIQPGGSMRDDEVIAAADEHGIAMVMTGMRHFRH.

The MGS-like domain maps to 6–158; that stretch reads KHIPAPDLHR…KNHAYVATVV (153 aa).

Belongs to the PurH family.

It catalyses the reaction (6R)-10-formyltetrahydrofolate + 5-amino-1-(5-phospho-beta-D-ribosyl)imidazole-4-carboxamide = 5-formamido-1-(5-phospho-D-ribosyl)imidazole-4-carboxamide + (6S)-5,6,7,8-tetrahydrofolate. The catalysed reaction is IMP + H2O = 5-formamido-1-(5-phospho-D-ribosyl)imidazole-4-carboxamide. It participates in purine metabolism; IMP biosynthesis via de novo pathway; 5-formamido-1-(5-phospho-D-ribosyl)imidazole-4-carboxamide from 5-amino-1-(5-phospho-D-ribosyl)imidazole-4-carboxamide (10-formyl THF route): step 1/1. The protein operates within purine metabolism; IMP biosynthesis via de novo pathway; IMP from 5-formamido-1-(5-phospho-D-ribosyl)imidazole-4-carboxamide: step 1/1. The sequence is that of Bifunctional purine biosynthesis protein PurH from Brucella anthropi (strain ATCC 49188 / DSM 6882 / CCUG 24695 / JCM 21032 / LMG 3331 / NBRC 15819 / NCTC 12168 / Alc 37) (Ochrobactrum anthropi).